The following is a 105-amino-acid chain: ATP synthase subunit c (105 aa).

Transmembrane regions (helical) follow at residues 37-57 (IGAG…GYIF) and 82-102 (SAIS…LIFV).

It belongs to the ATPase C chain family. F-type ATPases have 2 components, F(1) - the catalytic core - and F(0) - the membrane proton channel. F(1) has five subunits: alpha(3), beta(3), gamma(1), delta(1), epsilon(1). F(0) has three main subunits: a(1), b(2) and c(10-14). The alpha and beta chains form an alternating ring which encloses part of the gamma chain. F(1) is attached to F(0) by a central stalk formed by the gamma and epsilon chains, while a peripheral stalk is formed by the delta and b chains.

It is found in the cell membrane. Functionally, f(1)F(0) ATP synthase produces ATP from ADP in the presence of a proton or sodium gradient. F-type ATPases consist of two structural domains, F(1) containing the extramembraneous catalytic core and F(0) containing the membrane proton channel, linked together by a central stalk and a peripheral stalk. During catalysis, ATP synthesis in the catalytic domain of F(1) is coupled via a rotary mechanism of the central stalk subunits to proton translocation. In terms of biological role, key component of the F(0) channel; it plays a direct role in translocation across the membrane. A homomeric c-ring of between 10-14 subunits forms the central stalk rotor element with the F(1) delta and epsilon subunits. This Mycoplasma pneumoniae (strain ATCC 29342 / M129 / Subtype 1) (Mycoplasmoides pneumoniae) protein is ATP synthase subunit c.